Reading from the N-terminus, the 186-residue chain is PR-toxin biosynthesis cluster protein 7 (186 aa).

A helical membrane pass occupies residues 24-43 (LGEVTTGGVTPRGTFIFCPI).

The protein localises to the membrane. It functions in the pathway sesquiterpene biosynthesis. In terms of biological role, part of the gene cluster that mediates the biosynthesis of PR-toxin, a bicyclic sesquiterpene belonging to the eremophilane class and acting as a mycotoxin. The first step of the pathway is catalyzed by the aristolochene synthase which performs the cyclization of trans,trans-farnesyl diphosphate (FPP) to the bicyclic sesquiterpene aristolochene. Following the formation of aristolochene, the non-oxygenated aristolochene is converted to the trioxygenated intermediate eremofortin B, via 7-epi-neopetasone. This conversion appears to involve three enzymes, a hydroxysterol oxidase-like enzyme, the quinone-oxidase prx3 that forms the quinone-type-structure in the bicyclic nucleus of aristolochene with the C8-oxo group and the C-3 hydroxyl group, and the P450 monooxygenase ORF6 that introduces the epoxide at the double bond between carbons 1 and 2. No monoxy or dioxy-intermediates have been reported to be released to the broth, so these three early oxidative reactions may be coupled together. Eremofortin B is further oxidized by another P450 monooxygenase, that introduces a second epoxide between carbons 7 and 11 prior to acetylation to eremofortin A by the acetyltransferase ORF8. The second epoxidation may be performed by a second P450 monooxygenase. After the acetylation step, eremofortin A is converted to eremofortin C and then to PR-toxin. First the conversion of eremofortin A to eremofortin C proceeds by oxidation of the side chain of the molecule at C-12 and is catalyzed by the short-chain oxidoreductase prx1. The cytochrome P450 monooxygenase ORF6 is probably also involved in this step. The primary alcohol formed at C-12 is finally oxidized by the short-chain alcohol dehydrogenase prx4 that forms PR-toxin. This chain is PR-toxin biosynthesis cluster protein 7, found in Penicillium roqueforti (strain FM164).